A 375-amino-acid polypeptide reads, in one-letter code: POU domain, class 3, transcription factor 1-A (375 aa).

Disordered regions lie at residues 1-29, 67-138, and 151-200; these read MAAT…RMHQ, PASD…HQPL, and MLGP…PSSD. 3 stretches are compositionally biased toward polar residues: residues 107–117, 129–138, and 151–160; these read VHQQSPSSHAW, SPSSNSHQPL, and MLGPQASSLH. Residues 162-177 show a composition bias toward basic and acidic residues; it reads SMRDPLHDDPGVHDTQ. The region spanning 194-268 is the POU-specific domain; sequence EDAPSSDDLE…LLNKWLEETD (75 aa). The segment at residues 286–345 is a DNA-binding region (homeobox); sequence KRKKRTSIEVGVKGALENHFLKCPKPSAHEITSLADSLQLEKEVVRVWFCNRRQKEKRMT.

This sequence belongs to the POU transcription factor family. Class-3 subfamily. In embryos at the neural fold stage, localized primarily in the anterior neural plate, and localized mostly in the anterior region of the nerve cord of neurula stage embryos. In tailbud stages, expressed predominantly in the eye and brain, with weak expression along the length of the nerve cord. In adults, expressed in skin and brain.

Its subcellular location is the nucleus. Acts as a transcription factor. May play a role in neuronal differentiation. The protein is POU domain, class 3, transcription factor 1-A (pou3f1-a) of Xenopus laevis (African clawed frog).